Reading from the N-terminus, the 320-residue chain is Beta-ketoacyl-[acyl-carrier-protein] synthase III (320 aa).

Catalysis depends on residues cysteine 112 and histidine 245. The interval 246–250 (QANIR) is ACP-binding. Asparagine 275 is an active-site residue.

The protein belongs to the thiolase-like superfamily. FabH family. As to quaternary structure, homodimer.

It localises to the cytoplasm. The catalysed reaction is malonyl-[ACP] + acetyl-CoA + H(+) = 3-oxobutanoyl-[ACP] + CO2 + CoA. The protein operates within lipid metabolism; fatty acid biosynthesis. Catalyzes the condensation reaction of fatty acid synthesis by the addition to an acyl acceptor of two carbons from malonyl-ACP. Catalyzes the first condensation reaction which initiates fatty acid synthesis and may therefore play a role in governing the total rate of fatty acid production. Possesses both acetoacetyl-ACP synthase and acetyl transacylase activities. Its substrate specificity determines the biosynthesis of branched-chain and/or straight-chain of fatty acids. The polypeptide is Beta-ketoacyl-[acyl-carrier-protein] synthase III (Streptococcus thermophilus (strain ATCC BAA-250 / LMG 18311)).